The sequence spans 103 residues: Histone H4 (103 aa).

The segment covering 1-14 has biased composition (gly residues); the sequence is MSGRGKGGKGLGKG. A disordered region spans residues 1 to 20; the sequence is MSGRGKGGKGLGKGGAKRHR. Ser2 carries the post-translational modification N-acetylserine. Lys6 and Lys13 each carry N6-acetyl-N6-methyllysine; alternate. Lys17 carries the post-translational modification N6-acetyllysine. A DNA-binding region spans residues 17–21; it reads KRHRK. At Lys21 the chain carries N6-methyllysine.

This sequence belongs to the histone H4 family. The nucleosome is a histone octamer containing two molecules each of H2A, H2B, H3 and H4 assembled in one H3-H4 heterotetramer and two H2A-H2B heterodimers. The octamer wraps approximately 147 bp of DNA.

The protein resides in the nucleus. The protein localises to the chromosome. In terms of biological role, core component of nucleosome. Nucleosomes wrap and compact DNA into chromatin, limiting DNA accessibility to the cellular machineries which require DNA as a template. Histones thereby play a central role in transcription regulation, DNA repair, DNA replication and chromosomal stability. DNA accessibility is regulated via a complex set of post-translational modifications of histones, also called histone code, and nucleosome remodeling. The protein is Histone H4 (H4DEKL) of Dendronephthya klunzingeri (Klunzinger's soft coral).